A 738-amino-acid chain; its full sequence is Translation initiation factor IF-2 (738 aa).

A compositionally biased stretch (polar residues) spans 1–10 (MNSMRISGHQ). Residues 1-150 (MNSMRISGHQ…PTTVRAPVRP (150 aa)) form a disordered region. The segment covering 22–102 (AGGGRGPGNP…GGRGPSGGRG (81 aa)) has biased composition (gly residues). Over residues 103–120 (GDGRRREESPTDHEDGRI) the composition is skewed to basic and acidic residues. A compositionally biased stretch (low complexity) spans 121–143 (NRSGRSTSTTTTRTSSTLARPTT). The tr-type G domain occupies 238-405 (PRPPVVTIMG…MILLVADLNE (168 aa)). The segment at 247–254 (GHVDHGKT) is G1. 247-254 (GHVDHGKT) provides a ligand contact to GTP. The interval 272–276 (GITQH) is G2. Residues 293 to 296 (DTPG) are G3. GTP is bound by residues 293 to 297 (DTPGH) and 347 to 350 (NKID). Residues 347-350 (NKID) form a G4 region. Positions 383–385 (SAK) are G5.

Belongs to the TRAFAC class translation factor GTPase superfamily. Classic translation factor GTPase family. IF-2 subfamily.

Its subcellular location is the cytoplasm. In terms of biological role, one of the essential components for the initiation of protein synthesis. Protects formylmethionyl-tRNA from spontaneous hydrolysis and promotes its binding to the 30S ribosomal subunits. Also involved in the hydrolysis of GTP during the formation of the 70S ribosomal complex. The chain is Translation initiation factor IF-2 from Roseiflexus castenholzii (strain DSM 13941 / HLO8).